A 117-amino-acid polypeptide reads, in one-letter code: MARVKRGVMVRKRHKKLLEQAKGYRGSRSRRVKVARETVMKALWYAYRDRRNRKRDFRRLWIVRINAAARMHGMSYSRFMNGLKRAGIDLDRKILADMAVRDPAAFSRVVEQARQAV.

The protein belongs to the bacterial ribosomal protein bL20 family.

Binds directly to 23S ribosomal RNA and is necessary for the in vitro assembly process of the 50S ribosomal subunit. It is not involved in the protein synthesizing functions of that subunit. This is Large ribosomal subunit protein bL20 from Roseiflexus sp. (strain RS-1).